Consider the following 206-residue polypeptide: GTP cyclohydrolase 1 (206 aa).

3 residues coordinate Zn(2+): Cys-95, His-98, and Cys-166.

The protein belongs to the GTP cyclohydrolase I family. In terms of assembly, toroid-shaped homodecamer, composed of two pentamers of five dimers.

The enzyme catalyses GTP + H2O = 7,8-dihydroneopterin 3'-triphosphate + formate + H(+). The protein operates within cofactor biosynthesis; 7,8-dihydroneopterin triphosphate biosynthesis; 7,8-dihydroneopterin triphosphate from GTP: step 1/1. The sequence is that of GTP cyclohydrolase 1 from Bartonella bacilliformis (strain ATCC 35685 / KC583 / Herrer 020/F12,63).